Consider the following 466-residue polypeptide: Acetylcholine-gated chloride channel subunit acc-1 (466 aa).

The N-terminal stretch at 1–24 (MSHPGWIMVSFLTELLSQSSKGIA) is a signal peptide. Topologically, residues 25-242 (QSLDNCANDT…FVFERRYGWY (218 aa)) are extracellular. 3 N-linked (GlcNAc...) asparagine glycosylation sites follow: asparagine 32, asparagine 102, and asparagine 143. Cysteine 158 and cysteine 172 are disulfide-bonded. The N-linked (GlcNAc...) asparagine glycan is linked to asparagine 211. The chain crosses the membrane as a helical span at residues 243–263 (VLQGYIPTMVTIVISWISFYL). At 264-272 (GPRAIPART) the chain is on the cytoplasmic side. A helical membrane pass occupies residues 273-290 (MLGVNSLLAMTFQFGNII). Over 291–304 (RNLPRVSYVKAIDV) the chain is Extracellular. Residues 305 to 325 (WMLSGMLFIFLSLLELAVVGF) form a helical membrane-spanning segment. Topologically, residues 326 to 427 (MSRNEGLPPK…MRELRPETVD (102 aa)) are cytoplasmic. The tract at residues 333 to 352 (PPKVKKRKRQEDDDEGFSWK) is disordered. The helical transmembrane segment at 428–448 (FYSAIFFPTAYMLFNISYWSF) threads the bilayer. The Extracellular segment spans residues 449 to 466 (YLTSLSEYFDEDVNIDQP).

Belongs to the ligand-gated ion channel (TC 1.A.9) family. In terms of assembly, homopentamer (in vitro). Forms heteropentamers composed of acc-1 and acc-4 or acc-1 and acc-3. Both homopentamers and heteropentamers form functional ion channels. In terms of tissue distribution, expressed in a subset of cholinergic motor neurons including cholinergic motor neurons in the ventral cord, the retrovesicular ganglion and in head neurons such as the SMD, RMD motor neurons, the AVA and AVE command interneurons and the SAA neurons. Also expressed in a small number of glutamatergic neurons including the pharyngeal neurons MI and M3, the PLM neurons and a pair of neurons in the lateral ganglion.

The protein localises to the cell membrane. Acetylcholine-gated chloride channel subunit. Forms functional homopentameric (in vitro) and functional heteropentameric ion channels with acc-3 and acc-4 ion channel subunits. Currents in channels are triggered in response to acetylcholine, but not in response to GABA, glutamate, glycine, histamine or dopamine. The chain is Acetylcholine-gated chloride channel subunit acc-1 from Caenorhabditis elegans.